The primary structure comprises 96 residues: MNLNEDSLRKIAELSRLNIRPKEKEATLRDFNKILEYVDQVKGLDVSSIRDDEIYFRHENSIRPDLVGQHLSREEIEKFAPSFQNGYFVVPKVIET.

It belongs to the GatC family. Heterotrimer of A, B and C subunits.

It carries out the reaction L-glutamyl-tRNA(Gln) + L-glutamine + ATP + H2O = L-glutaminyl-tRNA(Gln) + L-glutamate + ADP + phosphate + H(+). The catalysed reaction is L-aspartyl-tRNA(Asn) + L-glutamine + ATP + H2O = L-asparaginyl-tRNA(Asn) + L-glutamate + ADP + phosphate + 2 H(+). In terms of biological role, allows the formation of correctly charged Asn-tRNA(Asn) or Gln-tRNA(Gln) through the transamidation of misacylated Asp-tRNA(Asn) or Glu-tRNA(Gln) in organisms which lack either or both of asparaginyl-tRNA or glutaminyl-tRNA synthetases. The reaction takes place in the presence of glutamine and ATP through an activated phospho-Asp-tRNA(Asn) or phospho-Glu-tRNA(Gln). The chain is Aspartyl/glutamyl-tRNA(Asn/Gln) amidotransferase subunit C from Leptospira borgpetersenii serovar Hardjo-bovis (strain JB197).